We begin with the raw amino-acid sequence, 136 residues long: Large ribosomal subunit protein uL16 (136 aa).

Belongs to the universal ribosomal protein uL16 family. Part of the 50S ribosomal subunit.

Binds 23S rRNA and is also seen to make contacts with the A and possibly P site tRNAs. The chain is Large ribosomal subunit protein uL16 from Rickettsia typhi (strain ATCC VR-144 / Wilmington).